Here is a 327-residue protein sequence, read N- to C-terminus: D-alanine--D-alanine ligase (327 aa).

One can recognise an ATP-grasp domain in the interval 113–312 (KRLWMTHDLS…YEDFVMQVVA (200 aa)). 139–194 (VADLGLPLIVKPAREGSSIGLSKVTDASQMREAFEKAAALDNDVIAETFIDGAELT) lines the ATP pocket. Positions 266, 279, and 281 each coordinate Mg(2+).

Belongs to the D-alanine--D-alanine ligase family. Mg(2+) serves as cofactor. Requires Mn(2+) as cofactor.

The protein resides in the cytoplasm. It carries out the reaction 2 D-alanine + ATP = D-alanyl-D-alanine + ADP + phosphate + H(+). It participates in cell wall biogenesis; peptidoglycan biosynthesis. Its function is as follows. Cell wall formation. This Cupriavidus pinatubonensis (strain JMP 134 / LMG 1197) (Cupriavidus necator (strain JMP 134)) protein is D-alanine--D-alanine ligase.